The sequence spans 541 residues: Putative ammonium transporter sll0537 (541 aa).

The next 11 membrane-spanning stretches (helical) occupy residues 6-26 (TLWLLLCAGLVFFMQAGFMCL), 44-64 (FADFGISVALFWSFGFSIMFG), 86-106 (LAVFFLFQAMFCGTATTIISG), 117-137 (YLLVAGLASGLIYPLFGDWAW), 161-181 (FAGSTVVHSVGAWIGLATILV), 203-223 (MPFSVLGTLILWFGWLGFNGG), 235-255 (IMVNTVLAGVGGMLMAGLISL), 260-280 (MIQVEPLMNGSLAGLVAITAS), 283-303 (VVMTPIAMVIGATGSAIAYLV), 316-336 (VDAVAVHGGAGVWGTLCVGLF), and 356-376 (LLGIGVCTLWAFGLAWVFLTL).

This sequence belongs to the ammonia transporter channel (TC 1.A.11.2) family.

It is found in the cell membrane. In Synechocystis sp. (strain ATCC 27184 / PCC 6803 / Kazusa), this protein is Putative ammonium transporter sll0537.